Reading from the N-terminus, the 21-residue chain is AKPAKRVAVTGAAGQIAYSLL.

11–17 serves as a coordination point for NAD(+); it reads GAAGQIA.

This sequence belongs to the LDH/MDH superfamily. MDH type 2 family.

The catalysed reaction is (S)-malate + NAD(+) = oxaloacetate + NADH + H(+). Catalyzes the reversible oxidation of malate to oxaloacetate. The chain is Malate dehydrogenase (mdh) from Vogesella indigofera (Pseudomonas indigofera).